A 480-amino-acid chain; its full sequence is Glycogen synthase (480 aa).

Belongs to the glycosyltransferase 1 family. Bacterial/plant glycogen synthase subfamily.

The catalysed reaction is [(1-&gt;4)-alpha-D-glucosyl](n) + ADP-alpha-D-glucose = [(1-&gt;4)-alpha-D-glucosyl](n+1) + ADP + H(+). Its pathway is glycan biosynthesis; glycogen biosynthesis. In terms of biological role, synthesizes alpha-1,4-glucan chains using ADP-glucose. This is Glycogen synthase from Rhizobium etli (strain ATCC 51251 / DSM 11541 / JCM 21823 / NBRC 15573 / CFN 42).